The chain runs to 431 residues: Adenylosuccinate synthetase (431 aa).

GTP is bound by residues 13–19 (GDEGKGK) and 41–43 (GHT). Asp14 (proton acceptor) is an active-site residue. 2 residues coordinate Mg(2+): Asp14 and Gly41. IMP-binding positions include 14-17 (DEGK), 39-42 (NAGH), Thr130, Arg144, Gln225, Thr240, and Arg304. The Proton donor role is filled by His42. Substrate is bound at residue 300–306 (ATTHRPR). Residues Arg306, 332–334 (KLD), and 414–416 (STG) each bind GTP.

Belongs to the adenylosuccinate synthetase family. Homodimer. The cofactor is Mg(2+).

The protein resides in the cytoplasm. The enzyme catalyses IMP + L-aspartate + GTP = N(6)-(1,2-dicarboxyethyl)-AMP + GDP + phosphate + 2 H(+). It functions in the pathway purine metabolism; AMP biosynthesis via de novo pathway; AMP from IMP: step 1/2. In terms of biological role, plays an important role in the de novo pathway of purine nucleotide biosynthesis. Catalyzes the first committed step in the biosynthesis of AMP from IMP. This is Adenylosuccinate synthetase from Nitrosococcus oceani (strain ATCC 19707 / BCRC 17464 / JCM 30415 / NCIMB 11848 / C-107).